A 158-amino-acid chain; its full sequence is C-type lectin mannose-binding isoform (158 aa).

The N-terminal stretch at 1-23 is a signal peptide; the sequence is MGRFLLVTLSLLVGAFSLNEANS. Cystine bridges form between cysteine 26/cysteine 37, cysteine 54/cysteine 154, cysteine 61/cysteine 156, and cysteine 129/cysteine 146. One can recognise a C-type lectin domain in the interval 33-155; the sequence is KNGFCYKVFN…CKALYSFICQ (123 aa). A Mannose-binding motif is present at residues 119 to 121; it reads EPN. N-linked (GlcNAc...) asparagine glycosylation is present at asparagine 121. 3 residues coordinate Ca(2+): glutamate 127, asparagine 142, and aspartate 143.

This sequence belongs to the true venom lectin family. In terms of assembly, dimer. Probably disulfide-linked homodimer. Expressed by the venom gland.

It is found in the secreted. Mannose-binding lectin that binds to and agglutinates rabbit (but not human) erythrocytes in a calcium-dependent manner. This chain is C-type lectin mannose-binding isoform, found in Oxyuranus scutellatus (Coastal taipan).